Here is a 292-residue protein sequence, read N- to C-terminus: Cyclin-dependent-like kinase 5 (292 aa).

Residues 4–286 form the Protein kinase domain; the sequence is YDKMEKIGEG…ADAALRHAYF (283 aa). Residues 10 to 18 and lysine 33 each bind ATP; that span reads IGEGTYGTV. The active-site Proton acceptor is the aspartate 126. Mg(2+) is bound by residues asparagine 131 and aspartate 144.

The protein belongs to the protein kinase superfamily. CMGC Ser/Thr protein kinase family. CDC2/CDKX subfamily. As to quaternary structure, heterodimer composed of a catalytic subunit cdk-5 and a regulatory subunit cdka-1. Interaction with cdka-1 is required for cdk-5 activation. Requires Mg(2+) as cofactor.

Its subcellular location is the cytoplasm. The protein localises to the cell projection. The protein resides in the dendrite. It catalyses the reaction L-seryl-[protein] + ATP = O-phospho-L-seryl-[protein] + ADP + H(+). The enzyme catalyses L-threonyl-[protein] + ATP = O-phospho-L-threonyl-[protein] + ADP + H(+). Its function is as follows. Proline-directed serine/threonine-protein kinase which, in several motor neurons, promotes the polarized trafficking of synaptic vesicles and dense-core vesicles (DCV). In the ventral nerve cord, phosphorylates lin-10 and thereby prevents lin-10-mediated anterograde trafficking of the glutamate receptor glr-1. Involved in the inhibition of glr-1 trafficking in hypoxic conditions. In DA motor neurons but not in DB motor neurons, regulates axonal transport of synaptic vesicle precursors by inhibiting dynein-mediated retrograde transport. Regulates the trafficking of dense-core vesicles in DA and DB motor neurons by promoting anterograde trafficking to the axon and preventing dynein-dependent trafficking to the dendrite. May regulate these processes in association with cdka-1/p35. Activity may be regulated by cyy-1. Involved in synapse formation during DD motor neuron remodeling by regulating transport of disassembled synaptic material to the new synaptic sites probably by activating the motor protein unc-104/kinesin-3. Regulates microtubule polarity in the dendrite of DB motor neurons. May also play a role in GABAergic synaptic vesicle localization in the ventral nerve cord. The chain is Cyclin-dependent-like kinase 5 from Caenorhabditis elegans.